The sequence spans 481 residues: Glutamate mutase epsilon subunit (481 aa).

R67 is an L-glutamate binding site. Adenosylcob(III)alamin is bound at residue G69. Position 99 (R99) interacts with L-glutamate. N122 lines the adenosylcob(III)alamin pocket. L-glutamate-binding positions include R148–H149, E170, and Y176. Residue P179 coordinates adenosylcob(III)alamin. Y180 contacts L-glutamate. 4 residues coordinate adenosylcob(III)alamin: F296, K325, E329, and I333.

It belongs to the methylaspartate mutase GlmE subunit family. In terms of assembly, heterotetramer composed of 2 epsilon subunits (GlmE) and 2 sigma subunits (GlmS). GlmE exists as a homodimer and GlmS as a monomer. Requires adenosylcob(III)alamin as cofactor.

It catalyses the reaction (2S,3S)-3-methyl-L-aspartate = L-glutamate. It participates in amino-acid degradation; L-glutamate degradation via mesaconate pathway; acetate and pyruvate from L-glutamate: step 1/4. Functionally, catalyzes the carbon skeleton rearrangement of L-glutamate to L-threo-3-methylaspartate ((2S,3S)-3-methylaspartate). This chain is Glutamate mutase epsilon subunit, found in Escherichia coli O157:H7.